Reading from the N-terminus, the 258-residue chain is uncharacterized protein (258 aa).

The next 6 helical transmembrane spans lie at 24–44 (IPLFTVIVALLTIILGIVNIF), 70–90 (PLVHHGVISFILGLLGIFLLM), 100–120 (LCTIAMFFGFLEVIPAIAYLI), 130–150 (VYVGIGGWVYSLLAMYLLNLF), 157–177 (LLNLPQVVRMALALVAPVLGL), and 181–201 (FSITIVLHLTAVVISIIFSFA). Residue His-188 is part of the active site.

This sequence belongs to the peptidase S54 family.

Its subcellular location is the golgi apparatus membrane. This is an uncharacterized protein from Schizosaccharomyces pombe (strain 972 / ATCC 24843) (Fission yeast).